A 285-amino-acid polypeptide reads, in one-letter code: Bifunctional protein FolD (285 aa).

NADP(+) contacts are provided by residues 165–167 (GRS) and Ser190.

Belongs to the tetrahydrofolate dehydrogenase/cyclohydrolase family. In terms of assembly, homodimer.

The enzyme catalyses (6R)-5,10-methylene-5,6,7,8-tetrahydrofolate + NADP(+) = (6R)-5,10-methenyltetrahydrofolate + NADPH. It catalyses the reaction (6R)-5,10-methenyltetrahydrofolate + H2O = (6R)-10-formyltetrahydrofolate + H(+). It functions in the pathway one-carbon metabolism; tetrahydrofolate interconversion. Its function is as follows. Catalyzes the oxidation of 5,10-methylenetetrahydrofolate to 5,10-methenyltetrahydrofolate and then the hydrolysis of 5,10-methenyltetrahydrofolate to 10-formyltetrahydrofolate. This is Bifunctional protein FolD from Staphylococcus haemolyticus (strain JCSC1435).